The chain runs to 205 residues: ATP phosphoribosyltransferase (205 aa).

The protein belongs to the ATP phosphoribosyltransferase family. Short subfamily.

It localises to the cytoplasm. The catalysed reaction is 1-(5-phospho-beta-D-ribosyl)-ATP + diphosphate = 5-phospho-alpha-D-ribose 1-diphosphate + ATP. It functions in the pathway amino-acid biosynthesis; L-histidine biosynthesis; L-histidine from 5-phospho-alpha-D-ribose 1-diphosphate: step 1/9. In terms of biological role, catalyzes the condensation of ATP and 5-phosphoribose 1-diphosphate to form N'-(5'-phosphoribosyl)-ATP (PR-ATP). Has a crucial role in the pathway because the rate of histidine biosynthesis seems to be controlled primarily by regulation of HisG enzymatic activity. In Thermococcus gammatolerans (strain DSM 15229 / JCM 11827 / EJ3), this protein is ATP phosphoribosyltransferase.